The chain runs to 123 residues: Peptide methionine sulfoxide reductase MsrA (123 aa).

C8 is an active-site residue.

This sequence belongs to the MsrA Met sulfoxide reductase family.

It catalyses the reaction L-methionyl-[protein] + [thioredoxin]-disulfide + H2O = L-methionyl-(S)-S-oxide-[protein] + [thioredoxin]-dithiol. It carries out the reaction [thioredoxin]-disulfide + L-methionine + H2O = L-methionine (S)-S-oxide + [thioredoxin]-dithiol. Has an important function as a repair enzyme for proteins that have been inactivated by oxidation. Catalyzes the reversible oxidation-reduction of methionine sulfoxide in proteins to methionine. In Thermoactinomyces vulgaris, this protein is Peptide methionine sulfoxide reductase MsrA.